The sequence spans 212 residues: Ras-related protein Rab-2A (212 aa).

Residue A2 is modified to N-acetylalanine. Residues 2–19 are required for interaction with PRKCI; that stretch reads AYAYLFKYIIIGDTGVGK. 7 residues coordinate GTP: G16, V17, G18, K19, S20, C21, and T38. S20 is a Mg(2+) binding site. The Switch 1 motif lies at 37-42; it reads LTIGVE. The Mg(2+) site is built by T38 and D61. The Switch 2 signature appears at 63–72; it reads AGQESFRSIT. 6 residues coordinate GTP: G64, N119, K120, D122, A150, and K151. 2 S-geranylgeranyl cysteine lipidation sites follow: C211 and C212.

It belongs to the small GTPase superfamily. Rab family. As to quaternary structure, interacts with PRKCI. Interacts with TRIP11. Interacts (in GTP-bound form) with GARIN1B. Interacts (GTP-bound) with HOPS complex component VPS39; interaction contributes to obtaining a functional HOPS complex that promotes autophagosome-lysosome membrane fusion driven by STX17-SNAP29-VAMP8. May interact with VPS41. The cofactor is Mg(2+). In terms of processing, prenylated. Prenylation is required for association with cellular membranes. As to expression, brain and parietal cells.

The protein resides in the endoplasmic reticulum-Golgi intermediate compartment membrane. Its subcellular location is the melanosome. It is found in the endoplasmic reticulum membrane. It localises to the golgi apparatus membrane. The protein localises to the cytoplasmic vesicle. The protein resides in the secretory vesicle. Its subcellular location is the acrosome. It is found in the autophagosome membrane. The enzyme catalyses GTP + H2O = GDP + phosphate + H(+). Its activity is regulated as follows. Regulated by guanine nucleotide exchange factors (GEFs) which promote the exchange of bound GDP for free GTP, GTPase activating proteins (GAPs) which increase the GTP hydrolysis activity, and GDP dissociation inhibitors (GDIs) which inhibit the dissociation of the nucleotide from the GTPase. Its function is as follows. The small GTPases Rab are key regulators of intracellular membrane trafficking, from the formation of transport vesicles to their fusion with membranes. Rabs cycle between active GTP-bound and inactive GDP-bound states. In their active state, drive transport of vesicular carriers from donor organelles to acceptor organelles to regulate the membrane traffic that maintains organelle identity and morphology. RAB2A regulates autophagy by promoting autophagosome-lysosome fusion via recruitment of the HOPS endosomal tethering complex; this process involves autophagosomal RAB2A and lysosomal RAB39A recruitment of HOPS subcomplexes VPS39-VPS11 and VPS41-VPS16-VPS18-VPS33A, respectively, which assemble into a functional complex to mediate membrane tethering and SNAREs-driven membrane fusion. Required for protein transport from the endoplasmic reticulum to the Golgi complex. Regulates the compacted morphology of the Golgi. Together with RAB2B, redundantly required for efficient autophagic flux. This is Ras-related protein Rab-2A (RAB2A) from Oryctolagus cuniculus (Rabbit).